We begin with the raw amino-acid sequence, 399 residues long: Subtilisin-like protease 4 (399 aa).

An N-terminal signal peptide occupies residues 1–19 (MVCLKTLSVFLAAFAAADA). Residues 20–118 (RAVFKTQGHK…VEQDQVVRIS (99 aa)) constitute a propeptide that is removed on maturation. Residues 38–117 (YIVVMKDGVS…YVEQDQVVRI (80 aa)) enclose the Inhibitor I9 domain. N102 carries N-linked (GlcNAc...) asparagine glycosylation. The 272-residue stretch at 128–399 (SWGLGRVSHR…NRLLYNGSGQ (272 aa)) folds into the Peptidase S8 domain. Active-site charge relay system residues include D160 and H191. N-linked (GlcNAc...) asparagine glycosylation is found at N252 and N308. S346 serves as the catalytic Charge relay system. N395 carries an N-linked (GlcNAc...) asparagine glycan.

Belongs to the peptidase S8 family.

Its subcellular location is the secreted. Its function is as follows. Secreted subtilisin-like serine protease with keratinolytic activity that contributes to pathogenicity. This Trichophyton tonsurans (Scalp ringworm fungus) protein is Subtilisin-like protease 4 (SUB4).